The chain runs to 410 residues: Proteasome-activating nucleotidase (410 aa).

A coiled-coil region spans residues 1 to 70 (MENNSQNVLK…LRGEIERFRT (70 aa)). ATP-binding positions include 195-200 (GTGKTL) and histidine 334. The tract at residues 408 to 410 (MFG) is docks into pockets in the proteasome alpha-ring to cause gate opening.

This sequence belongs to the AAA ATPase family. In terms of assembly, homohexamer. The hexameric complex has a two-ring architecture resembling a top hat that caps the 20S proteasome core at one or both ends. Upon ATP-binding, the C-terminus of PAN interacts with the alpha-rings of the proteasome core by binding to the intersubunit pockets.

It localises to the cytoplasm. In terms of biological role, ATPase which is responsible for recognizing, binding, unfolding and translocation of substrate proteins into the archaeal 20S proteasome core particle. Is essential for opening the gate of the 20S proteasome via an interaction with its C-terminus, thereby allowing substrate entry and access to the site of proteolysis. Thus, the C-termini of the proteasomal ATPase function like a 'key in a lock' to induce gate opening and therefore regulate proteolysis. Unfolding activity requires energy from ATP hydrolysis, whereas ATP binding alone promotes ATPase-20S proteasome association which triggers gate opening, and supports translocation of unfolded substrates. This is Proteasome-activating nucleotidase from Methanothermobacter thermautotrophicus (strain ATCC 29096 / DSM 1053 / JCM 10044 / NBRC 100330 / Delta H) (Methanobacterium thermoautotrophicum).